Consider the following 218-residue polypeptide: MEPGFWHEKWQQQLIGFHQQDINPFLVKYWQTLALPADAKVFVPLCGKSLDMCFLAEQGHQVIGCELNELAVQQFFEENQLPMNQSAEGEHQHYQTEQVSLYQGDIFTLPQSITAQVNGFYDRAALIAWPESMRTQYAKQLAQLLPSGSVGLLVTLDYPQETLSGPPFAVSPTWVETHLSDDFEIQALACQDVLADNPRFVKKEVPWLNEAVYLLRRK.

Residues tryptophan 10, leucine 45, glutamate 66, and arginine 123 each contribute to the S-adenosyl-L-methionine site.

The protein belongs to the class I-like SAM-binding methyltransferase superfamily. TPMT family.

It is found in the cytoplasm. It catalyses the reaction S-adenosyl-L-methionine + a thiopurine = S-adenosyl-L-homocysteine + a thiopurine S-methylether.. The chain is Thiopurine S-methyltransferase from Shewanella sp. (strain MR-4).